A 264-amino-acid polypeptide reads, in one-letter code: MSLVAESNSGTISEQELDKVQLYSDLCLYEEALTKLVDSVDNFKPQLEIGKQLIEADKKLYSTLDLLPQYDSVFTRLRTLDDEISKVDQQTKNILSILNECHDDLNALPLLEEVEFEKKMILKQREKIKSNVLLEYATKLAKFTKIPPTFDKGTIGPNNFIWPAEDALRKGMLAMASLHGKELTKLPGQEDGEEDGSTANEDKNIVKDAEGAEGEIRQDDKKEDDSFVFGANANDAEGDEDKNAGEDEDEAMDSDLDLFNPDEF.

Residues 183-264 form a disordered region; sequence LTKLPGQEDG…DLDLFNPDEF (82 aa). A compositionally biased stretch (basic and acidic residues) spans 200 to 225; that stretch reads NEDKNIVKDAEGAEGEIRQDDKKEDD. The span at 236–264 shows a compositional bias: acidic residues; it reads AEGDEDKNAGEDEDEAMDSDLDLFNPDEF.

Belongs to the Mediator complex subunit 4 family. As to quaternary structure, component of the Mediator complex.

It localises to the nucleus. Functionally, component of the Mediator complex, a coactivator involved in the regulated transcription of nearly all RNA polymerase II-dependent genes. Mediator functions as a bridge to convey information from gene-specific regulatory proteins to the basal RNA polymerase II transcription machinery. Mediator is recruited to promoters by direct interactions with regulatory proteins and serves as a scaffold for the assembly of a functional preinitiation complex with RNA polymerase II and the general transcription factors. This is Mediator of RNA polymerase II transcription subunit 4 (MED4) from Candida glabrata (strain ATCC 2001 / BCRC 20586 / JCM 3761 / NBRC 0622 / NRRL Y-65 / CBS 138) (Yeast).